The sequence spans 498 residues: ATP synthase subunit beta, chloroplastic (498 aa).

Residue 172 to 179 (GGAGVGKT) participates in ATP binding.

Belongs to the ATPase alpha/beta chains family. F-type ATPases have 2 components, CF(1) - the catalytic core - and CF(0) - the membrane proton channel. CF(1) has five subunits: alpha(3), beta(3), gamma(1), delta(1), epsilon(1). CF(0) has four main subunits: a(1), b(1), b'(1) and c(9-12).

It localises to the plastid. Its subcellular location is the chloroplast thylakoid membrane. The enzyme catalyses ATP + H2O + 4 H(+)(in) = ADP + phosphate + 5 H(+)(out). Functionally, produces ATP from ADP in the presence of a proton gradient across the membrane. The catalytic sites are hosted primarily by the beta subunits. In Jasminum nudiflorum (Winter jasmine), this protein is ATP synthase subunit beta, chloroplastic.